A 96-amino-acid polypeptide reads, in one-letter code: UPF0235 protein Pfl01_5322 (96 aa).

It belongs to the UPF0235 family.

This chain is UPF0235 protein Pfl01_5322, found in Pseudomonas fluorescens (strain Pf0-1).